A 953-amino-acid polypeptide reads, in one-letter code: Dual serine/threonine and tyrosine protein kinase (953 aa).

The Protein kinase domain maps to 665–926 (PKLEREIGRG…VQSKLQDIYT (262 aa)). ATP-binding positions include 671–679 (IGRGQYGVV) and Lys694. Asp791 (proton acceptor) is an active-site residue. The interval 932–953 (REAEGGGGGGAKEQQNLKSDTL) is disordered.

It belongs to the protein kinase superfamily. Ser/Thr protein kinase family.

The protein resides in the cytoplasm. Its subcellular location is the cell membrane. It localises to the apical cell membrane. It is found in the basolateral cell membrane. The protein localises to the cell junction. The enzyme catalyses L-seryl-[protein] + ATP = O-phospho-L-seryl-[protein] + ADP + H(+). It carries out the reaction L-threonyl-[protein] + ATP = O-phospho-L-threonyl-[protein] + ADP + H(+). It catalyses the reaction L-tyrosyl-[protein] + ATP = O-phospho-L-tyrosyl-[protein] + ADP + H(+). In terms of biological role, may act as a positive regulator of ERK phosphorylation downstream of fibroblast growth factor-receptor activation. May induce both caspase-dependent apoptosis and caspase-independent cell death. May play a role in the embryonic development. This is Dual serine/threonine and tyrosine protein kinase from Strongylocentrotus purpuratus (Purple sea urchin).